Consider the following 79-residue polypeptide: Acyl carrier protein (79 aa).

The Carrier domain maps to 2-77 (SEIGERVKKI…DATKFLEKNA (76 aa)). Ser37 bears the O-(pantetheine 4'-phosphoryl)serine mark.

Belongs to the acyl carrier protein (ACP) family. 4'-phosphopantetheine is transferred from CoA to a specific serine of apo-ACP by AcpS. This modification is essential for activity because fatty acids are bound in thioester linkage to the sulfhydryl of the prosthetic group.

It is found in the cytoplasm. It participates in lipid metabolism; fatty acid biosynthesis. Functionally, carrier of the growing fatty acid chain in fatty acid biosynthesis. The chain is Acyl carrier protein from Nitrobacter winogradskyi (strain ATCC 25391 / DSM 10237 / CIP 104748 / NCIMB 11846 / Nb-255).